Consider the following 295-residue polypeptide: GATA zinc finger domain-containing protein 23 (295 aa).

The span at 115–126 shows a compositional bias: low complexity; that stretch reads ASTSKTATSKNV. Residues 115-240 are disordered; sequence ASTSKTATSK…KRGRPSKIQP (126 aa). The segment covering 127-145 has biased composition (polar residues); it reads ISNIENNTNKSQPLESNDL. Residues 146–163 show a composition bias toward low complexity; sequence TPPSSKSSNSSPSTSPSK. The segment covering 164–174 has biased composition (basic residues); that stretch reads RVSKSKTRVTK. A compositionally biased stretch (low complexity) spans 181-227; that stretch reads STSSSGETENLTTTSTADTTATTDTADTTDGTNTRTSNTSSDDTTTE. The segment at residues 229 to 241 is a DNA-binding region (a.T hook); the sequence is TKKRGRPSKIQPD. The GATA-type zinc-finger motif lies at 243–270; that stretch reads CYVCRRTFTSYWRKGIFNDQNEDLCNPC.

The polypeptide is GATA zinc finger domain-containing protein 23 (gtaW) (Dictyostelium discoideum (Social amoeba)).